The chain runs to 282 residues: Elongation factor Ts (282 aa).

An involved in Mg(2+) ion dislocation from EF-Tu region spans residues 80–83; it reads TDFV.

Belongs to the EF-Ts family.

The protein resides in the cytoplasm. Its function is as follows. Associates with the EF-Tu.GDP complex and induces the exchange of GDP to GTP. It remains bound to the aminoacyl-tRNA.EF-Tu.GTP complex up to the GTP hydrolysis stage on the ribosome. In Chlamydia trachomatis serovar D (strain ATCC VR-885 / DSM 19411 / UW-3/Cx), this protein is Elongation factor Ts (tsf).